The primary structure comprises 729 residues: Elongation factor 2 (729 aa).

The tr-type G domain occupies 19–262 (EQIRNIAIAA…MVCEHFPNPV (244 aa)). GTP-binding positions include 28-35 (AHVDHGKT), 94-98 (DTPGH), and 148-151 (NKVD). His-597 is modified (diphthamide).

This sequence belongs to the TRAFAC class translation factor GTPase superfamily. Classic translation factor GTPase family. EF-G/EF-2 subfamily.

The protein localises to the cytoplasm. Functionally, catalyzes the GTP-dependent ribosomal translocation step during translation elongation. During this step, the ribosome changes from the pre-translocational (PRE) to the post-translocational (POST) state as the newly formed A-site-bound peptidyl-tRNA and P-site-bound deacylated tRNA move to the P and E sites, respectively. Catalyzes the coordinated movement of the two tRNA molecules, the mRNA and conformational changes in the ribosome. The polypeptide is Elongation factor 2 (Natronomonas pharaonis (strain ATCC 35678 / DSM 2160 / CIP 103997 / JCM 8858 / NBRC 14720 / NCIMB 2260 / Gabara) (Halobacterium pharaonis)).